A 305-amino-acid polypeptide reads, in one-letter code: Olfactory receptor 9G1 (305 aa).

Over 1–24 (MQRSNHTVTEFILLGFTTDPGMQL) the chain is Extracellular. Asparagine 5 carries N-linked (GlcNAc...) asparagine glycosylation. Residues 25–45 (GLFVVFLGVYSLTVVGNSTLI) form a helical membrane-spanning segment. Residues 46–53 (VLICNDSC) are Cytoplasmic-facing. Residues 54–74 (LHTPMYFFTGNLSFLDLWYSS) traverse the membrane as a helical segment. The Extracellular portion of the chain corresponds to 75–98 (VYTPKILVTCISEDKSISFAGCLC). Cysteine 96 and cysteine 188 form a disulfide bridge. The chain crosses the membrane as a helical span at residues 99-119 (QFFFSAGLAYSECYLLAAVAY). Over 120 to 138 (DRYVAISKPLLYAQAMSIK) the chain is Cytoplasmic. The chain crosses the membrane as a helical span at residues 139–159 (LCALLVAVSYCGGFINSSIIT). Residues 160–196 (KKTFSFNFCRENIIDDFFCDLLPLVELACGEKGGYKI) lie on the Extracellular side of the membrane. The chain crosses the membrane as a helical span at residues 197–216 (MMYFLLASNVICPAVLILAS). Topologically, residues 217–236 (YLFIITSVLRISSSKGYLKA) are cytoplasmic. Residues 237–257 (FSTCSSHLTSVTLYYGSILYI) traverse the membrane as a helical segment. At 258-270 (YALPRSSYSFDMD) the chain is on the extracellular side. Residues 271-291 (KIVSTFYTVVFPMLNLMIYSL) traverse the membrane as a helical segment. The Cytoplasmic segment spans residues 292–305 (RNKDVKEALKKLLP).

Belongs to the G-protein coupled receptor 1 family.

It localises to the cell membrane. Its function is as follows. Odorant receptor. In Homo sapiens (Human), this protein is Olfactory receptor 9G1 (OR9G1).